Consider the following 218-residue polypeptide: Ropporin-1-like protein (218 aa).

Residues Pro17 to Asp54 enclose the RIIa domain. Positions Gln199 to Lys218 are disordered.

It belongs to the ropporin family. As to quaternary structure, component of axonemal radial spoke complexes.

Its subcellular location is the cell projection. It is found in the cilium. It localises to the flagellum. Functionally, functions as part of axonemal radial spoke complexes that play an important part in the motility of sperm and cilia. Important for male fertility. Involved in fibrous sheath integrity and sperm motility, plays a role in PKA-dependent signaling processes required for spermatozoa capacitation. The chain is Ropporin-1-like protein (ropn1l) from Danio rerio (Zebrafish).